We begin with the raw amino-acid sequence, 531 residues long: UDP-glucuronosyltransferase 1A7 (531 aa).

The N-terminal stretch at 1-25 (MAPADFPASLPLCVCLLLASGLAQA) is a signal peptide. N-linked (GlcNAc...) asparagine glycosylation is found at Asn-293 and Asn-431. Residues 489–509 (VIGFLLAIVLTVVFIVFKCCA) traverse the membrane as a helical segment.

It belongs to the UDP-glycosyltransferase family. Homodimer. Homooligomer. Interacts with UGT1A1, UGT1A3, UGT1A4, UGT1A6, UGT1A8, UGT1A9 and UGT1A10 to form heterodimers. Widely expressed with highest levels detected in colon and kidney.

It is found in the endoplasmic reticulum membrane. The catalysed reaction is glucuronate acceptor + UDP-alpha-D-glucuronate = acceptor beta-D-glucuronoside + UDP + H(+). It catalyses the reaction 17alpha-estradiol + UDP-alpha-D-glucuronate = 17alpha-estradiol 3-O-(beta-D-glucuronate) + UDP + H(+). It carries out the reaction prunetin + UDP-alpha-D-glucuronate = prunetin-5-O-beta-D-glucuronide + UDP. The enzyme catalyses 5-epi-5-F2t-IsoP + UDP-alpha-D-glucuronate = 5-epi-5-F2t-IsoP-glucuronide + UDP + H(+). The catalysed reaction is (E)-ferulate + UDP-alpha-D-glucuronate = (E)-ferulic acid beta-D-glucuronate ester + UDP. It catalyses the reaction candesartan + UDP-alpha-D-glucuronate = candesartan O-beta-D-glucuronoside + UDP. It carries out the reaction SN-38 + UDP-alpha-D-glucuronate = SN-38 O-beta-D-glucuronide + UDP + H(+). The enzyme catalyses mycophenolate + UDP-alpha-D-glucuronate = mycophenolate 7-O-beta-D-glucuronide + UDP + H(+). Its function is as follows. UDP-glucuronosyltransferase (UGT) that catalyzes phase II biotransformation reactions in which lipophilic substrates are conjugated with glucuronic acid to increase the metabolite's water solubility, thereby facilitating excretion into either the urine or bile. Essential for the elimination and detoxification of drugs, xenobiotics and endogenous compounds. Catalyzes the glucuronidation of endogenous estrogen hormone epiestradiol. Involved in the glucuronidation of F2-isoprostane (5-epi-5-F2t-IsoP). Involved in the glucuronidation of the phytochemical ferulic acid at the carboxylic acid group. Also catalyzes the glucuronidation of the isoflavones genistein, daidzein, glycitein, formononetin, biochanin A and prunetin, which are phytoestrogens with anticancer and cardiovascular properties. Involved in the glucuronidation of the AGTR1 angiotensin receptor antagonist caderastan, a drug which can inhibit the effect of angiotensin II. Involved in the biotransformation of 7-ethyl-10-hydroxycamptothecin (SN-38), the pharmacologically active metabolite of the anticancer drug irinotecan. Also metabolizes mycophenolate, an immunosuppressive agent. The sequence is that of UDP-glucuronosyltransferase 1A7 from Mus musculus (Mouse).